A 51-amino-acid polypeptide reads, in one-letter code: Large ribosomal subunit protein bL33 (51 aa).

Belongs to the bacterial ribosomal protein bL33 family.

This is Large ribosomal subunit protein bL33 from Alteromonas mediterranea (strain DSM 17117 / CIP 110805 / LMG 28347 / Deep ecotype).